The chain runs to 198 residues: FMN-dependent NADH:quinone oxidoreductase (198 aa).

FMN contacts are provided by residues 92–95 and 136–139; these read MWNL and SRGG.

Belongs to the azoreductase type 1 family. As to quaternary structure, homodimer. FMN is required as a cofactor.

It carries out the reaction 2 a quinone + NADH + H(+) = 2 a 1,4-benzosemiquinone + NAD(+). The enzyme catalyses N,N-dimethyl-1,4-phenylenediamine + anthranilate + 2 NAD(+) = 2-(4-dimethylaminophenyl)diazenylbenzoate + 2 NADH + 2 H(+). In terms of biological role, quinone reductase that provides resistance to thiol-specific stress caused by electrophilic quinones. Also exhibits azoreductase activity. Catalyzes the reductive cleavage of the azo bond in aromatic azo compounds to the corresponding amines. This Clostridium perfringens (strain SM101 / Type A) protein is FMN-dependent NADH:quinone oxidoreductase.